Reading from the N-terminus, the 459-residue chain is Jacalin-related lectin 12 (459 aa).

Jacalin-type lectin domains are found at residues 2–148 (SQDS…YFTP), 151–296 (PTRM…YITT), and 298–443 (TLTK…YSFP).

This sequence belongs to the jacalin lectin family.

This is Jacalin-related lectin 12 (JAL12) from Arabidopsis thaliana (Mouse-ear cress).